Here is a 70-residue protein sequence, read N- to C-terminus: Mu-agatoxin-Ao1a (70 aa).

Residues 1 to 20 form the signal peptide; that stretch reads MKAIIFFCFLSVMVFIVAEA. Positions 21–33 are excised as a propeptide; it reads SSLEALKIFEGER. Disulfide bonds link cysteine 35–cysteine 50, cysteine 42–cysteine 55, cysteine 49–cysteine 65, and cysteine 57–cysteine 63. Position 69 is an asparagine amide (asparagine 69).

It belongs to the neurotoxin 07 (Beta/delta-agtx) family. 04 (aga-5) subfamily. Expressed by the venom gland.

The protein resides in the secreted. Its function is as follows. Insecticidal neurotoxin that modulates the insect Nav channel (DmNaV1/tipE (para/tipE)) in a unique manner, with both the activation and inactivation processes being affected. The voltage dependence of activation is shifted toward more hyperpolarized potentials (analogous to site 4 toxins) and a non-inactivating persistent sodium current is induced (site 3-like action). Interestingly, both effects take place in a voltage-dependent manner, producing a bell-shaped curve between -80 and 0 mV. The protein is Mu-agatoxin-Ao1a of Agelena orientalis (Funnel-web spider).